Consider the following 138-residue polypeptide: Single-stranded DNA-binding protein 4 (138 aa).

The region spanning 1 to 104 is the SSB domain; it reads MINNVVLIGR…VVADSFQILE (104 aa). The segment at 107–138 is disordered; that stretch reads DNSTNQASMDDQLPPSFGNSQPMDISDDDLPF. The Important for interaction with partner proteins motif lies at 133-138; that stretch reads DDDLPF.

Homotetramer.

In terms of biological role, plays an important role in DNA replication, recombination and repair. Binds to ssDNA and to an array of partner proteins to recruit them to their sites of action during DNA metabolism. This chain is Single-stranded DNA-binding protein 4 (ssb4), found in Streptococcus agalactiae serotype V (strain ATCC BAA-611 / 2603 V/R).